A 31-amino-acid polypeptide reads, in one-letter code: MPTITSYFGFLLAASTITTALFIGLSKIRLI.

A helical membrane pass occupies residues 4 to 26; that stretch reads ITSYFGFLLAASTITTALFIGLS.

Belongs to the PetL family. As to quaternary structure, the 4 large subunits of the cytochrome b6-f complex are cytochrome b6, subunit IV (17 kDa polypeptide, PetD), cytochrome f and the Rieske protein, while the 4 small subunits are PetG, PetL, PetM and PetN. The complex functions as a dimer.

Its subcellular location is the plastid. The protein localises to the chloroplast thylakoid membrane. In terms of biological role, component of the cytochrome b6-f complex, which mediates electron transfer between photosystem II (PSII) and photosystem I (PSI), cyclic electron flow around PSI, and state transitions. PetL is important for photoautotrophic growth as well as for electron transfer efficiency and stability of the cytochrome b6-f complex. The chain is Cytochrome b6-f complex subunit 6 from Acorus calamus (Sweet flag).